Here is a 305-residue protein sequence, read N- to C-terminus: Tyrosine recombinase XerC (305 aa).

The Core-binding (CB) domain occupies 2–88 (NQLELYIDTF…TLRSFYRFLE (87 aa)). One can recognise a Tyr recombinase domain in the interval 109-294 (PVPGFLYQEE…TKDHLREAYM (186 aa)). Active-site residues include Arg-149, Lys-173, His-246, Arg-249, and His-272. The active-site O-(3'-phospho-DNA)-tyrosine intermediate is Tyr-281.

The protein belongs to the 'phage' integrase family. XerC subfamily. As to quaternary structure, forms a cyclic heterotetrameric complex composed of two molecules of XerC and two molecules of XerD.

The protein localises to the cytoplasm. Its function is as follows. Site-specific tyrosine recombinase, which acts by catalyzing the cutting and rejoining of the recombining DNA molecules. The XerC-XerD complex is essential to convert dimers of the bacterial chromosome into monomers to permit their segregation at cell division. It also contributes to the segregational stability of plasmids. The sequence is that of Tyrosine recombinase XerC from Oceanobacillus iheyensis (strain DSM 14371 / CIP 107618 / JCM 11309 / KCTC 3954 / HTE831).